The primary structure comprises 782 residues: Endonuclease MutS2 (782 aa).

ATP is bound at residue 336–343; the sequence is GPNTGGKT. Positions 707 to 782 constitute a Smr domain; the sequence is LDLRGYRYEE…GFGVTVAELK (76 aa).

This sequence belongs to the DNA mismatch repair MutS family. MutS2 subfamily. As to quaternary structure, homodimer. Binds to stalled ribosomes, contacting rRNA.

Its function is as follows. Endonuclease that is involved in the suppression of homologous recombination and thus may have a key role in the control of bacterial genetic diversity. Acts as a ribosome collision sensor, splitting the ribosome into its 2 subunits. Detects stalled/collided 70S ribosomes which it binds and splits by an ATP-hydrolysis driven conformational change. Acts upstream of the ribosome quality control system (RQC), a ribosome-associated complex that mediates the extraction of incompletely synthesized nascent chains from stalled ribosomes and their subsequent degradation. Probably generates substrates for RQC. The chain is Endonuclease MutS2 from Staphylococcus carnosus (strain TM300).